Consider the following 515-residue polypeptide: Fatty acyl-CoA reductase 2 (515 aa).

Topologically, residues 1 to 465 (MSMIAAFYGG…AKQHLKRLRN (465 aa)) are cytoplasmic. Residues 466 to 484 (IHYLFNTALFLIAWRLLIA) traverse the membrane as a helical segment. Residues 485-515 (RSQVARNVWFFIVSFCYKFLSYFRASSTLNV) lie on the Peroxisomal side of the membrane.

It belongs to the fatty acyl-CoA reductase family.

It is found in the peroxisome membrane. It carries out the reaction a long-chain fatty acyl-CoA + 2 NADPH + 2 H(+) = a long-chain primary fatty alcohol + 2 NADP(+) + CoA. It catalyses the reaction hexadecanoyl-CoA + 2 NADPH + 2 H(+) = hexadecan-1-ol + 2 NADP(+) + CoA. The enzyme catalyses octadecanoyl-CoA + 2 NADPH + 2 H(+) = octadecan-1-ol + 2 NADP(+) + CoA. The catalysed reaction is a very long-chain fatty acyl-CoA + 2 NADPH + 2 H(+) = a very long-chain primary fatty alcohol + 2 NADP(+) + CoA. It carries out the reaction an ultra-long-chain fatty acyl-CoA + 2 NADPH + 2 H(+) = an ultra long-chain primary fatty alcohol + 2 NADP(+) + CoA. It catalyses the reaction eicosanoyl-CoA + 2 NADPH + 2 H(+) = eicosan-1-ol + 2 NADP(+) + CoA. The enzyme catalyses docosanoyl-CoA + 2 NADPH + 2 H(+) = docosan-1-ol + 2 NADP(+) + CoA. The catalysed reaction is tetracosanoyl-CoA + 2 NADPH + 2 H(+) = tetracosan-1-ol + 2 NADP(+) + CoA. It carries out the reaction hexacosanoyl-CoA + 2 NADPH + 2 H(+) = hexacosan-1-ol + 2 NADP(+) + CoA. It catalyses the reaction octacosanoyl-CoA + 2 NADPH + 2 H(+) = octacosan-1-ol + 2 NADP(+) + CoA. The enzyme catalyses triacontanoyl-CoA + 2 NADPH + 2 H(+) = triacontan-1-ol + 2 NADP(+) + CoA. The catalysed reaction is 18-methylnonadecanoyl-CoA + 2 NADPH + 2 H(+) = 18-methylnonadecan-1-ol + 2 NADP(+) + CoA. It carries out the reaction 20-methylheneicosanoyl-CoA + 2 NADPH + 2 H(+) = 20-methylheneicosan-1-ol + 2 NADP(+) + CoA. It catalyses the reaction 22-methyltricosanoyl-CoA + 2 NADPH + 2 H(+) = 22-methyltricosan-1-ol + 2 NADP(+) + CoA. The enzyme catalyses 24-methylpentacosanoyl-CoA + 2 NADPH + 2 H(+) = 24-methylpentacosan-1-ol + 2 NADP(+) + CoA. Its function is as follows. Catalyzes the reduction of saturated but not unsaturated C16 or C18 fatty acyl-CoA to fatty alcohols (FAls). A lower activity can be observed with shorter fatty acyl-CoA substrates. Can produce very long-chain and ultra long-chain FAls, regardless of whether they have a straight or branched chain. Involved in the production of ether lipids/plasmalogens and wax monoesters whose synthesis requires FAls as substrates. In Bos taurus (Bovine), this protein is Fatty acyl-CoA reductase 2.